We begin with the raw amino-acid sequence, 253 residues long: 5'-nucleotidase SurE (253 aa).

Residues Asp8, Asp9, Ser39, and Asn96 each contribute to the a divalent metal cation site.

Belongs to the SurE nucleotidase family. It depends on a divalent metal cation as a cofactor.

The protein localises to the cytoplasm. It catalyses the reaction a ribonucleoside 5'-phosphate + H2O = a ribonucleoside + phosphate. Its function is as follows. Nucleotidase that shows phosphatase activity on nucleoside 5'-monophosphates. The protein is 5'-nucleotidase SurE of Rhodopirellula baltica (strain DSM 10527 / NCIMB 13988 / SH1).